The primary structure comprises 347 residues: Quinolinate synthase (347 aa).

Residues histidine 47 and serine 68 each coordinate iminosuccinate. [4Fe-4S] cluster is bound at residue cysteine 113. Iminosuccinate-binding positions include tyrosine 139–asparagine 141 and serine 156. Cysteine 200 serves as a coordination point for [4Fe-4S] cluster. Iminosuccinate is bound by residues histidine 226 to glutamate 228 and threonine 243. Cysteine 297 lines the [4Fe-4S] cluster pocket.

Belongs to the quinolinate synthase family. Type 1 subfamily. [4Fe-4S] cluster is required as a cofactor.

It localises to the cytoplasm. The catalysed reaction is iminosuccinate + dihydroxyacetone phosphate = quinolinate + phosphate + 2 H2O + H(+). It participates in cofactor biosynthesis; NAD(+) biosynthesis; quinolinate from iminoaspartate: step 1/1. Functionally, catalyzes the condensation of iminoaspartate with dihydroxyacetone phosphate to form quinolinate. The sequence is that of Quinolinate synthase from Salmonella gallinarum (strain 287/91 / NCTC 13346).